A 520-amino-acid chain; its full sequence is GMP synthase [glutamine-hydrolyzing] (520 aa).

One can recognise a Glutamine amidotransferase type-1 domain in the interval 9-202 (SVLIVDFGSQ…IHNIAGIKGD (194 aa)). The active-site Nucleophile is the Cys-86. Residues His-176 and Glu-178 contribute to the active site. The region spanning 203 to 395 (WSMSAYRQKA…LGLPDSFIGR (193 aa)) is the GMPS ATP-PPase domain. 230-236 (SGGVDSS) contributes to the ATP binding site.

As to quaternary structure, homodimer.

The enzyme catalyses XMP + L-glutamine + ATP + H2O = GMP + L-glutamate + AMP + diphosphate + 2 H(+). It participates in purine metabolism; GMP biosynthesis; GMP from XMP (L-Gln route): step 1/1. Functionally, catalyzes the synthesis of GMP from XMP. The chain is GMP synthase [glutamine-hydrolyzing] from Rhizobium johnstonii (strain DSM 114642 / LMG 32736 / 3841) (Rhizobium leguminosarum bv. viciae).